Reading from the N-terminus, the 492-residue chain is Probable small intestine urate exporter (492 aa).

The tract at residues 1–20 is disordered; that stretch reads MSTGADLKAREGDIPSDNMT. Asn18, Asn44, Asn53, Asn63, Asn72, and Asn87 each carry an N-linked (GlcNAc...) asparagine glycan. Transmembrane regions (helical) follow at residues 112–132, 134–154, 156–176, 198–218, 225–245, 287–307, 327–347, 363–383, 393–413, 426–446, and 456–476; these read LSYG…VFGA, YVVG…PLAA, AGVA…VMVL, IAAS…GLIC, YIFY…FPLV, LPLW…STVM, ILSA…GLLA, KLFT…LPWV, FLVL…INFL, LLQV…GFFI, and NVFF…LIFS.

It belongs to the major facilitator superfamily. Sodium/anion cotransporter family. As to expression, expressed in the small intestine (at protein level).

It is found in the apical cell membrane. It catalyses the reaction 3 Na(+)(out) + phosphate(out) = 3 Na(+)(in) + phosphate(in). It carries out the reaction urate(out) + n chloride(in) = urate(in) + n chloride(out). The enzyme catalyses L-thyroxine(out) = L-thyroxine(in). The catalysed reaction is 3,3',5-triiodo-L-thyronine(out) = 3,3',5-triiodo-L-thyronine(in). Functionally, acts as a membrane potential-dependent organic anion transporter, the transport requires a low concentration of chloride ions. Mediates chloride-dependent transport of urate. Mediates sodium-independent high affinity transport of thyroid hormones including L-thyroxine (T4) and 3,3',5-triiodo-L-thyronine (T3). Can actively transport inorganic phosphate into cells via Na(+) cotransport. This Mus musculus (Mouse) protein is Probable small intestine urate exporter (Slc17a4).